The primary structure comprises 359 residues: Membrane-bound lytic murein transglycosylase C (359 aa).

Positions 1–16 (MKKYLALALIAPLLIS) are cleaved as a signal peptide. Residue Cys-17 is the site of N-palmitoyl cysteine attachment. A lipid anchor (S-diacylglycerol cysteine) is attached at Cys-17.

The protein belongs to the transglycosylase Slt family.

It is found in the cell outer membrane. It catalyses the reaction Exolytic cleavage of the (1-&gt;4)-beta-glycosidic linkage between N-acetylmuramic acid (MurNAc) and N-acetylglucosamine (GlcNAc) residues in peptidoglycan, from either the reducing or the non-reducing ends of the peptidoglycan chains, with concomitant formation of a 1,6-anhydrobond in the MurNAc residue.. Murein-degrading enzyme. May play a role in recycling of muropeptides during cell elongation and/or cell division. The polypeptide is Membrane-bound lytic murein transglycosylase C (Shigella dysenteriae serotype 1 (strain Sd197)).